Reading from the N-terminus, the 265-residue chain is Zearalenone hydrolase (265 aa).

Zearalenone contacts are provided by glycine 35, serine 105, and serine 106. Serine 105 is an active-site residue. Glutamate 129 is a catalytic residue. Residues tryptophan 185, tyrosine 189, and histidine 243 each coordinate zearalenone. Residue histidine 243 is part of the active site.

Belongs to the AB hydrolase superfamily. Hydrolase RutD family. As to quaternary structure, homodimer.

It carries out the reaction zearalenone + H2O = hydrolyzed zearalenone + H(+). Its function is as follows. Lactonohydrolase that specifically hydrolyzes zearalenone (ZEN), an oestrogenic mycotoxin produced by numerous Fusarium specie, into a non-toxic alkylresorcinol product. The protein is Zearalenone hydrolase of Cladophialophora bantiana (strain ATCC 10958 / CDC1940 / 8579 / CBS 173.52) (Xylohypha bantiana).